The following is a 124-amino-acid chain: Fluoride-specific ion channel FluC (124 aa).

The next 4 membrane-spanning stretches (helical) occupy residues 3-23 (VLLI…VSNL), 34-54 (IGTL…FIFI), 68-88 (LLLI…IETF), and 100-120 (ALNV…GVLI). Na(+)-binding residues include glycine 75 and threonine 78.

The protein belongs to the fluoride channel Fluc/FEX (TC 1.A.43) family.

It localises to the cell inner membrane. The enzyme catalyses fluoride(in) = fluoride(out). With respect to regulation, na(+) is not transported, but it plays an essential structural role and its presence is essential for fluoride channel function. Its function is as follows. Fluoride-specific ion channel. Important for reducing fluoride concentration in the cell, thus reducing its toxicity. The chain is Fluoride-specific ion channel FluC from Coxiella burnetii (strain Dugway 5J108-111).